Here is a 445-residue protein sequence, read N- to C-terminus: Phosphoglucosamine mutase (445 aa).

Catalysis depends on S101, which acts as the Phosphoserine intermediate. Mg(2+)-binding residues include S101, D240, D242, and D244. S101 carries the phosphoserine modification.

The protein belongs to the phosphohexose mutase family. Mg(2+) is required as a cofactor. Post-translationally, activated by phosphorylation.

The enzyme catalyses alpha-D-glucosamine 1-phosphate = D-glucosamine 6-phosphate. Its function is as follows. Catalyzes the conversion of glucosamine-6-phosphate to glucosamine-1-phosphate. The polypeptide is Phosphoglucosamine mutase (Pseudomonas paraeruginosa (strain DSM 24068 / PA7) (Pseudomonas aeruginosa (strain PA7))).